Here is a 417-residue protein sequence, read N- to C-terminus: Serine hydroxymethyltransferase 1 (417 aa).

Residues L121 and 125–127 each bind (6S)-5,6,7,8-tetrahydrofolate; that span reads GHL. At K229 the chain carries N6-(pyridoxal phosphate)lysine. 355–357 provides a ligand contact to (6S)-5,6,7,8-tetrahydrofolate; sequence SPF.

Belongs to the SHMT family. Homodimer. Pyridoxal 5'-phosphate is required as a cofactor.

It localises to the cytoplasm. The catalysed reaction is (6R)-5,10-methylene-5,6,7,8-tetrahydrofolate + glycine + H2O = (6S)-5,6,7,8-tetrahydrofolate + L-serine. The protein operates within one-carbon metabolism; tetrahydrofolate interconversion. Its pathway is amino-acid biosynthesis; glycine biosynthesis; glycine from L-serine: step 1/1. Catalyzes the reversible interconversion of serine and glycine with tetrahydrofolate (THF) serving as the one-carbon carrier. This reaction serves as the major source of one-carbon groups required for the biosynthesis of purines, thymidylate, methionine, and other important biomolecules. Also exhibits THF-independent aldolase activity toward beta-hydroxyamino acids, producing glycine and aldehydes, via a retro-aldol mechanism. This is Serine hydroxymethyltransferase 1 from Pectobacterium atrosepticum (strain SCRI 1043 / ATCC BAA-672) (Erwinia carotovora subsp. atroseptica).